Reading from the N-terminus, the 69-residue chain is DNA gyrase inhibitor YacG (69 aa).

Zn(2+) is bound by residues Cys14, Cys17, Cys33, and Cys37. The tract at residues Ala46–Tyr69 is disordered. Acidic residues predominate over residues Ser59 to Tyr69.

This sequence belongs to the DNA gyrase inhibitor YacG family. In terms of assembly, interacts with GyrB. Zn(2+) is required as a cofactor.

In terms of biological role, inhibits all the catalytic activities of DNA gyrase by preventing its interaction with DNA. Acts by binding directly to the C-terminal domain of GyrB, which probably disrupts DNA binding by the gyrase. The polypeptide is DNA gyrase inhibitor YacG (Aliivibrio fischeri (strain ATCC 700601 / ES114) (Vibrio fischeri)).